A 368-amino-acid chain; its full sequence is Galactoside 2-alpha-L-fucosyltransferase Sec1 (368 aa).

Topologically, residues 1-20 (MPSDSCLLSLTVLQRLRAIC) are cytoplasmic. A helical; Signal-anchor for type II membrane protein membrane pass occupies residues 21–41 (PPLSTFYLFFVIFVVSTIFHC). Residues 42 to 368 (HRRLGLVPAP…APKRHWGALL (327 aa)) are Lumenal-facing. Residues Asn195, Asn289, and Asn315 are each glycosylated (N-linked (GlcNAc...) asparagine).

It belongs to the glycosyltransferase 11 family.

The protein resides in the golgi apparatus. It localises to the golgi stack membrane. It catalyses the reaction a ganglioside GM1 + GDP-beta-L-fucose = a ganglioside Fuc-GM1 + GDP + H(+). The protein operates within protein modification; protein glycosylation. Catalyzes the transfer of alpha 1,2-linked fucose to ganglioside GM1 and galacto-N-biose. The sequence is that of Galactoside 2-alpha-L-fucosyltransferase Sec1 from Mus musculus (Mouse).